The primary structure comprises 1265 residues: Protein FAM193A (1265 aa).

Residues 107-142 are a coiled coil; the sequence is SEDTYSTLLQRYQRSEEELRRVAEEWLECQKRIDAY. The disordered stretch occupies residues 247-272; sequence APDYLAERSPPSVSSASSGSGSSSPI. Residues 255 to 271 are compositionally biased toward low complexity; sequence SPPSVSSASSGSGSSSP. Ser-293 is subject to Phosphoserine. 7 disordered regions span residues 331–407, 553–586, 626–674, 750–785, 822–841, 859–881, and 893–1163; these read NGGG…EQAP, GSEILGPTLSETRPEALPPPSSNETPAVSDSKEK, VQSS…APLP, ENGVYDPQQDDGDESADEDSCSEHSSSTSTSTNQKE, LTKRKEEQPKKMDQISERES, ETKPVSSTRAAKRARHKQRKLEE, and EHLH…DRVN. The segment covering 355 to 365 has biased composition (acidic residues); it reads EADDEEADGES. Phosphoserine is present on Ser-383. Ser-642 is modified (phosphoserine). Residues 757 to 769 show a composition bias toward acidic residues; it reads QQDDGDESADEDS. The span at 772-781 shows a compositional bias: low complexity; that stretch reads EHSSSTSTST. Basic residues predominate over residues 868–877; that stretch reads AAKRARHKQR. Residues 873–932 are a coiled coil; it reads RHKQRKLEEKARLEAEARAREHLHLQEEQRRREEEEDEEEEEDRFKEEFQRLQELQKLRA. Composition is skewed to basic and acidic residues over residues 893–905 and 915–929; these read EHLHLQEEQRRRE and DRFKEEFQRLQELQK. Basic residues predominate over residues 931–940; sequence RAVKKKKKER. The span at 953 to 973 shows a compositional bias: polar residues; that stretch reads RNFQAATESVPNSGNIHNGSL. A coiled-coil region spans residues 1093-1118; sequence TEQKREERKVNSNNNNKKQLNHIKDE. Phosphoserine occurs at positions 1129 and 1144. Basic residues predominate over residues 1149-1159; the sequence is GKNKKNKKKKG.

It belongs to the FAM193 family.

The sequence is that of Protein FAM193A (FAM193A) from Homo sapiens (Human).